The primary structure comprises 452 residues: Probable hexaprenyl pyrophosphate synthase, mitochondrial (452 aa).

Isopentenyl diphosphate contacts are provided by K108, R111, and H204. Mg(2+) is bound by residues D211 and D215. R220 is a binding site for an all-trans-polyprenyl diphosphate. R221 contributes to the isopentenyl diphosphate binding site. K303, T304, Q341, and K358 together coordinate an all-trans-polyprenyl diphosphate.

This sequence belongs to the FPP/GGPP synthase family. Mg(2+) is required as a cofactor.

The protein localises to the mitochondrion. Its pathway is cofactor biosynthesis; ubiquinone biosynthesis. Its function is as follows. Assembly of polyisoprenoid side chains. The polyprenyl synthase of coenzyme Q biosynthesis catalyzes the formation from isopentenyl diphosphate of all trans-polyprenyl pyrophosphates generally ranging in length of between 6 and 10 isoprene units depending on the species. The protein is Probable hexaprenyl pyrophosphate synthase, mitochondrial (COQ1) of Yarrowia lipolytica (strain CLIB 122 / E 150) (Yeast).